Consider the following 534-residue polypeptide: DM7 family protein GE17491 (534 aa).

It belongs to the DM7 family.

In Drosophila yakuba (Fruit fly), this protein is DM7 family protein GE17491.